The following is a 1023-amino-acid chain: MFHLRTCAAKLRPLTASQTVKTFSQNRPAAARTFQQIRCYSAPVAAEPFLSGTSSNYVEEMYCAWLENPKSVHKSWDIFFRNTNAGAPPGTAYQSPLPLSRGSLAAVAHAQSLVEAQPNVDKLVEDHLAVQSLIRAYQIRGHHVAQLDPLGILDADLDSSVPADIISSTDKLGFYGLDESDLDKVFHLPTTTFIGGQESALPLREIIRRLEMAYCQHIGVEFMFINDLEQCQWIRQKFETPGIMQFTNEEKRTLLARLVRSTRFEEFLQRKWSSEKRFGLEGCEVLIPALKTIIDKSSENGVDYVIMGMPHRGRLNVLANVIRKELEQIFCQFDSKLEAADEGSGDVKYHLGMYHRRINRVTDRNITLSLVANPSHLEAADPVVMGKTKAEQFYCGDTEGKKVMSILLHGDAAFAGQGIVYETFHLSDLPSYTTHGTVHVVVNNQIGFTTDPRMARSSPYPTDVARVVNAPIFHVNSDDPEAVMYVCKVAAEWRSTFHKDVVVDLVCYRRNGHNEMDEPMFTQPLMYKQIRKQKPVLQKYAELLVSQGVVNQPEYEEEISKYDKICEEAFARSKDEKILHIKHWLDSPWPGFFTLDGQPRSMSCPSTGLTEDILTHIGNVASSVPVENFTIHGGLSRILKTRGEMVKNRTVDWALAEYMAFGSLLKEGIHIRLSGQDVERGTFSHRHHVLHDQNVDKRTCIPMNHLWPNQAPYTVCNSSLSEYGVLGFELGFAMASPNALVLWEAQFGDFHNTAQCIIDQFICPGQAKWVRQNGIVLLLPHGMEGMGPEHSSARPERFLQMCNDDPDVLPDLKEANFDINQLYDCNWVVVNCSTPGNFFHVLRRQILLPFRKPLIIFTPKSLLRHPEARSSFDEMLPGTHFQRVIPEDGPAAQNPENVKRLLFCTGKVYYDLTRERKARDMVGQVAITRIEQLSPFPFDLLLKEVQKYPSAELAWCQEEHKNQGYYDYVKPRLRTTISRAKPVWYAGRDPAAAPATGNKKTHLTELQRLLDTAFDLDIFKNFS.

The transit peptide at 1–40 directs the protein to the mitochondrion; that stretch reads MFHLRTCAAKLRPLTASQTVKTFSQNRPAAARTFQQIRCY. K74 carries the N6-succinyllysine modification. S100 is modified (phosphoserine). Positions 143, 156, and 158 each coordinate Ca(2+). Position 312 (R312) interacts with thiamine diphosphate. K401 bears the N6-acetyllysine mark. D411, N444, and I446 together coordinate thiamine diphosphate. Mg(2+)-binding residues include D411, N444, and I446. K534 is covalently cross-linked (Glycyl lysine isopeptide (Lys-Gly) (interchain with G-Cter in ubiquitin)). K564 carries the post-translational modification N6-succinyllysine. Q676 serves as a coordination point for thiamine diphosphate. An N6-acetyllysine modification is found at K970.

This sequence belongs to the alpha-ketoglutarate dehydrogenase family. Homodimer. The 2-oxoglutarate dehydrogenase complex is composed of OGDH (2-oxoglutarate dehydrogenase; E1), DLST (dihydrolipoamide succinyltransferase; E2), DLD (dihydrolipoamide dehydrogenase; E3) and the assembly factor KGD4. It contains multiple copies of the three enzymatic components (E1, E2 and E3). In the nucleus, the 2-oxoglutarate dehydrogenase complex associates with KAT2A. Interacts with ABHD11; this interaction maintains the functional lipoylation of the 2-oxoglutarate dehydrogenase complex. The cofactor is thiamine diphosphate. Mg(2+) serves as cofactor.

It is found in the mitochondrion. Its subcellular location is the nucleus. The enzyme catalyses N(6)-[(R)-lipoyl]-L-lysyl-[protein] + 2-oxoglutarate + H(+) = N(6)-[(R)-S(8)-succinyldihydrolipoyl]-L-lysyl-[protein] + CO2. With respect to regulation, calcium ions and ADP stimulate, whereas ATP and NADH reduce catalytic activity. Its function is as follows. 2-oxoglutarate dehydrogenase (E1o) component of the 2-oxoglutarate dehydrogenase complex (OGDHC). Participates in the first step, rate limiting for the overall conversion of 2-oxoglutarate to succinyl-CoA and CO(2) catalyzed by the whole OGDHC. Catalyzes the irreversible decarboxylation of 2-oxoglutarate (alpha-ketoglutarate) via the thiamine diphosphate (ThDP) cofactor and subsequent transfer of the decarboxylated acyl intermediate on an oxidized dihydrolipoyl group that is covalently amidated to the E2 enzyme (dihydrolipoyllysine-residue succinyltransferase or DLST). Plays a key role in the Krebs (citric acid) cycle, which is a common pathway for oxidation of fuel molecules, including carbohydrates, fatty acids, and amino acids. Can catalyze the decarboxylation of 2-oxoadipate in vitro, but at a much lower rate than 2-oxoglutarate. Mainly active in the mitochondrion. A fraction of the 2-oxoglutarate dehydrogenase complex also localizes in the nucleus and is required for lysine succinylation of histones: associates with KAT2A on chromatin and provides succinyl-CoA to histone succinyltransferase KAT2A. The polypeptide is 2-oxoglutarate dehydrogenase complex component E1 (Pongo abelii (Sumatran orangutan)).